Reading from the N-terminus, the 359-residue chain is Aromatic amino acid aminotransferase (359 aa).

N6-(pyridoxal phosphate)lysine is present on K223.

Belongs to the class-II pyridoxal-phosphate-dependent aminotransferase family. In terms of assembly, homodimer. Requires pyridoxal 5'-phosphate as cofactor.

It carries out the reaction an aromatic L-alpha-amino acid + 2-oxoglutarate = an aromatic oxo-acid + L-glutamate. Functionally, aminotransferase that catalyzes the conversion of aromatic amino acids and 2-oxoglutarate into corresponding aromatic oxo acids and L-glutamate. The sequence is that of Aromatic amino acid aminotransferase from Streptomyces avermitilis (strain ATCC 31267 / DSM 46492 / JCM 5070 / NBRC 14893 / NCIMB 12804 / NRRL 8165 / MA-4680).